We begin with the raw amino-acid sequence, 137 residues long: Histone H2B (137 aa).

Residues 1 to 10 (MPPKPADKKP) are compositionally biased toward basic and acidic residues. Residues 1 to 45 (MPPKPADKKPASKAPATASKAPEKKDAGKKTAASGDKKKRTKARK) form a disordered region. Residues lysine 8 and lysine 9 each carry the N6-acetyllysine; alternate modification. Residues lysine 8 and lysine 9 each participate in a glycyl lysine isopeptide (Lys-Gly) (interchain with G-Cter in SUMO); alternate cross-link. Residue serine 12 is modified to Phosphoserine. Residue lysine 13 is modified to N6-acetyllysine. The residue at position 24 (lysine 24) is an N6-acetyllysine; alternate. Lysine 24 is covalently cross-linked (Glycyl lysine isopeptide (Lys-Gly) (interchain with G-Cter in SUMO); alternate). Lysine 25 participates in a covalent cross-link: Glycyl lysine isopeptide (Lys-Gly) (interchain with G-Cter in SUMO). Lysine 131 participates in a covalent cross-link: Glycyl lysine isopeptide (Lys-Gly) (interchain with G-Cter in ubiquitin).

This sequence belongs to the histone H2B family. In terms of assembly, the nucleosome is a histone octamer containing two molecules each of H2A, H2B, H3 and H4 assembled in one H3-H4 heterotetramer and two H2A-H2B heterodimers. The octamer wraps approximately 147 bp of DNA. Monoubiquitinated by the ubc-2-bre-1 complex to form H2BK123ub1. H2BK123ub1 gives a specific tag for epigenetic transcriptional activation and is also prerequisite for H3K4me and H3K79me formation. H2BK123ub1 also modulates the formation of double-strand breaks during meiosis and is a prerequisite for DNA-damage checkpoint activation. Post-translationally, phosphorylated by ste-20 to form H2BS10ph during progression through meiotic prophase. May be correlated with chromosome condensation. In terms of processing, acetylated by gcn-5 to form H2BK11ac and H2BK16ac. H2BK16ac can also be formed by esa-1. Acetylation of N-terminal lysines and particularly formation of H2BK11acK16ac has a positive effect on transcription. Sumoylation to form H2BK6su or H2BK7su, and probably also H2BK16su or H2BK17su, occurs preferentially near the telomeres and represses gene transcription.

It is found in the nucleus. It localises to the chromosome. In terms of biological role, core component of nucleosome. Nucleosomes wrap and compact DNA into chromatin, limiting DNA accessibility to the cellular machineries which require DNA as a template. Histones thereby play a central role in transcription regulation, DNA repair, DNA replication and chromosomal stability. DNA accessibility is regulated via a complex set of post-translational modifications of histones, also called histone code, and nucleosome remodeling. In Neurospora crassa (strain ATCC 24698 / 74-OR23-1A / CBS 708.71 / DSM 1257 / FGSC 987), this protein is Histone H2B (hh2b).